Consider the following 472-residue polypeptide: Alanine--anticapsin ligase (472 aa).

Glu-109 is a binding site for Mg(2+). ATP-binding residues include Lys-138 and Lys-178. The 214-residue stretch at 142 to 355 (RAAFNRAGVK…MAQLLLDVLC (214 aa)) folds into the ATP-grasp domain. Residue Leu-182 participates in Mg(2+) binding. ATP contacts are provided by residues 184-185 (SS), 226-229 (EEFL), and Gln-268. Substrate is bound by residues Glu-273 and 309–311 (HTE). Positions 311 and 324 each coordinate Mg(2+). Residue 328 to 331 (RFAG) coordinates substrate.

Monomer or homodimer. Mg(2+) is required as a cofactor.

The catalysed reaction is L-anticapsin + L-alanine + ATP = bacilysin + ADP + phosphate + H(+). It functions in the pathway antibiotic biosynthesis; bacilysin biosynthesis. Part of the bacABCDEFG operon responsible for the biosynthesis of bacilysin, an irreversible inactivator of the glutaminase domain of glucosamine synthetase. Catalyzes the formation of alpha-dipeptides from various L-amino acids in the presence of ATP. In vivo catalyzes the ligation of L-alanine and L-anticapsin (epoxycyclohexanonyl-Ala) to produce the final bacilysin antibiotic (L-Ala-L-4S-cyclohexenonyl-Ala dipeptide). In Bacillus subtilis, this protein is Alanine--anticapsin ligase.